Consider the following 603-residue polypeptide: Aspartate--tRNA(Asp/Asn) ligase (603 aa).

Positions 205 to 208 (QLFK) are aspartate. Arg-227 is a binding site for L-aspartate. ATP is bound by residues 227–229 (RDE) and Gln-236. His-463 lines the L-aspartate pocket. Glu-497 is a binding site for ATP. Arg-504 lines the L-aspartate pocket. 549–552 (GMDR) is an ATP binding site.

This sequence belongs to the class-II aminoacyl-tRNA synthetase family. Type 1 subfamily. Homodimer.

It localises to the cytoplasm. It carries out the reaction tRNA(Asx) + L-aspartate + ATP = L-aspartyl-tRNA(Asx) + AMP + diphosphate. Its function is as follows. Aspartyl-tRNA synthetase with relaxed tRNA specificity since it is able to aspartylate not only its cognate tRNA(Asp) but also tRNA(Asn). Reaction proceeds in two steps: L-aspartate is first activated by ATP to form Asp-AMP and then transferred to the acceptor end of tRNA(Asp/Asn). The protein is Aspartate--tRNA(Asp/Asn) ligase of Anaeromyxobacter dehalogenans (strain 2CP-C).